The chain runs to 30 residues: 136 kDa hydroxyproline-rich cell wall glycoprotein, major component (30 aa).

Residues Pro8, Pro9, Pro10, Pro11, Pro12, Pro17, Pro18, Pro19, Pro20, Pro26, Pro27, Pro28, and Pro29 each carry the 4-hydroxyproline modification.

In terms of processing, O-glycosylated.

Its subcellular location is the secreted. The protein localises to the cell wall. This is 136 kDa hydroxyproline-rich cell wall glycoprotein, major component from Phaseolus vulgaris (Kidney bean).